Here is a 101-residue protein sequence, read N- to C-terminus: Small ribosomal subunit protein uS14 (101 aa).

Belongs to the universal ribosomal protein uS14 family. As to quaternary structure, part of the 30S ribosomal subunit. Contacts proteins S3 and S10.

Its function is as follows. Binds 16S rRNA, required for the assembly of 30S particles and may also be responsible for determining the conformation of the 16S rRNA at the A site. This is Small ribosomal subunit protein uS14 from Cupriavidus metallidurans (strain ATCC 43123 / DSM 2839 / NBRC 102507 / CH34) (Ralstonia metallidurans).